The chain runs to 124 residues: Small polypeptide ROTUNDIFOLIA LIKE 3 (124 aa).

Positions 1–25 are disordered; sequence MEDERWKLSSSKGRSKSGRSCSSSS. Residues asparagine 35 and asparagine 38 are each glycosylated (N-linked (GlcNAc...) asparagine). Residues 59–75 form a helical membrane-spanning segment; it reads AWSAAGAGGGGASSSSS. The interval 60–95 is disordered; that stretch reads WSAAGAGGGGASSSSSSQHQHQQQQQQSNNSQRLSK. A compositionally biased stretch (low complexity) spans 71 to 91; the sequence is SSSSSSQHQHQQQQQQSNNSQ. N-linked (GlcNAc...) asparagine glycosylation occurs at asparagine 88. Residues 92-124 form a required for DVL/RTFL small polypeptide activity region; the sequence is RLSKKCVEAVKEHRARFYIVRRCVSMLVCWRDY.

The protein belongs to the DVL/RTFL small polypeptides family.

It localises to the cell membrane. Small polypeptide acting as a regulatory molecule which coordinates cellular responses required for differentiation, growth and development, probably by restricting polar cell proliferation in lateral organs (e.g. leaves and petioles). The sequence is that of Small polypeptide ROTUNDIFOLIA LIKE 3 from Oryza sativa subsp. indica (Rice).